The primary structure comprises 113 residues: Histone H3-8 (113 aa).

The segment covering asparagine 1–arginine 17 has biased composition (basic residues). The segment at asparagine 1–histidine 31 is disordered.

It belongs to the histone H3 family. In terms of assembly, the nucleosome is a histone octamer containing two molecules each of H2A, H2B, H3 and H4 assembled in one H3-H4 heterotetramer and two H2A-H2B heterodimers. The octamer wraps approximately 147 bp of DNA.

The protein localises to the nucleus. Its subcellular location is the chromosome. Its function is as follows. Core component of nucleosome. Nucleosomes wrap and compact DNA into chromatin, limiting DNA accessibility to the cellular machineries which require DNA as a template. Histones thereby play a central role in transcription regulation, DNA repair, DNA replication and chromosomal stability. DNA accessibility is regulated via a complex set of post-translational modifications of histones, also called histone code, and nucleosome remodeling. This chain is Histone H3-8 (H3-8), found in Stylonychia lemnae (Ciliate).